Here is a 453-residue protein sequence, read N- to C-terminus: Probable glycine dehydrogenase (decarboxylating) subunit 1 (453 aa).

Belongs to the GcvP family. N-terminal subunit subfamily. As to quaternary structure, the glycine cleavage system is composed of four proteins: P, T, L and H. In this organism, the P 'protein' is a heterodimer of two subunits.

The enzyme catalyses N(6)-[(R)-lipoyl]-L-lysyl-[glycine-cleavage complex H protein] + glycine + H(+) = N(6)-[(R)-S(8)-aminomethyldihydrolipoyl]-L-lysyl-[glycine-cleavage complex H protein] + CO2. Its function is as follows. The glycine cleavage system catalyzes the degradation of glycine. The P protein binds the alpha-amino group of glycine through its pyridoxal phosphate cofactor; CO(2) is released and the remaining methylamine moiety is then transferred to the lipoamide cofactor of the H protein. The sequence is that of Probable glycine dehydrogenase (decarboxylating) subunit 1 from Caulobacter sp. (strain K31).